Reading from the N-terminus, the 278-residue chain is MAIRKYKPTTPGRRGSSVSDFAEITRSTPEKSLVRPLHGRGGRNAHGRITTRHKGGGHKRAYRLIDFRRNDKDGVPAKVAHIEYDPNRTARIALLHYADGEKRYIIAPKGLFQGAPVESGAGADIKPGNNLPLRNIPTGTTIHAVELRPGGGAKMARSAGSSIQLLGKEGTYATLRMPSGEIRRVDVRCRASIGEVGNAEQSNINWGKAGRMRWKGKRPTVRGVVMNPVDHPHGGGEGKTSGGRHPVSPWGKPEGRTRKNKASDKLIVRRRRTGKNKR.

Disordered regions lie at residues 1–58 (MAIR…GGGH) and 225–278 (VMNP…KNKR). The segment covering 37-58 (LHGRGGRNAHGRITTRHKGGGH) has biased composition (basic residues). The span at 253 to 267 (PEGRTRKNKASDKLI) shows a compositional bias: basic and acidic residues. A compositionally biased stretch (basic residues) spans 268 to 278 (VRRRRTGKNKR).

This sequence belongs to the universal ribosomal protein uL2 family. Part of the 50S ribosomal subunit. Forms a bridge to the 30S subunit in the 70S ribosome.

Functionally, one of the primary rRNA binding proteins. Required for association of the 30S and 50S subunits to form the 70S ribosome, for tRNA binding and peptide bond formation. It has been suggested to have peptidyltransferase activity; this is somewhat controversial. Makes several contacts with the 16S rRNA in the 70S ribosome. The polypeptide is Large ribosomal subunit protein uL2 (Rhodococcus opacus (strain B4)).